Consider the following 387-residue polypeptide: MKVTQMYKNFLENEKAGGVVLIIATIVSLLVANSSIGHSYIGFWEMFVGGHTIEHYVNDGLMTIFFLLIGLELEREVYAGELSNFKKALLPIIAALGGMIVPACIHMFFNTGTPFQSGSGIPMATDIAFAVGILSLLGNKVPLSLKVFLTALAVIDDLGAIFTIAIFYSRGIDVMYLAGAAGIWAVLFILNRRNVNILWPYLLGGIVMWYFMLHSGVHATITGVILAFVIPFGKGDPDSISIKLQHWLHKPVAFIILPIFALANTCIIIDSDWSASLMSTNSIGIFLGLVVGKPLGITLFCAIAVWLGICSIPNDLKWMQVIGVACLGGIGFTMSIFITLLAFDDHAVISGSKIAIMLSSVTAALIGLLWLKMTLKEPLSNELTEEI.

The next 12 membrane-spanning stretches (helical) occupy residues 16-36 (AGGV…NSSI), 53-73 (IEHY…GLEL), 89-109 (LLPI…HMFF), 118-138 (GSGI…SLLG), 147-167 (VFLT…IAIF), 171-191 (GIDV…FILN), 197-217 (ILWP…HSGV), 220-240 (TITG…PDSI), 251-271 (PVAF…IIDS), 283-303 (IGIF…FCAI), 321-341 (VIGV…ITLL), and 354-374 (IAIM…LKMT).

The protein belongs to the NhaA Na(+)/H(+) (TC 2.A.33) antiporter family.

Its subcellular location is the cell inner membrane. The enzyme catalyses Na(+)(in) + 2 H(+)(out) = Na(+)(out) + 2 H(+)(in). In terms of biological role, na(+)/H(+) antiporter that extrudes sodium in exchange for external protons. In Cytophaga hutchinsonii (strain ATCC 33406 / DSM 1761 / CIP 103989 / NBRC 15051 / NCIMB 9469 / D465), this protein is Na(+)/H(+) antiporter NhaA.